A 327-amino-acid polypeptide reads, in one-letter code: Methionyl-tRNA formyltransferase (327 aa).

122 to 125 (SLLP) contacts (6S)-5,6,7,8-tetrahydrofolate.

This sequence belongs to the Fmt family.

It carries out the reaction L-methionyl-tRNA(fMet) + (6R)-10-formyltetrahydrofolate = N-formyl-L-methionyl-tRNA(fMet) + (6S)-5,6,7,8-tetrahydrofolate + H(+). In terms of biological role, attaches a formyl group to the free amino group of methionyl-tRNA(fMet). The formyl group appears to play a dual role in the initiator identity of N-formylmethionyl-tRNA by promoting its recognition by IF2 and preventing the misappropriation of this tRNA by the elongation apparatus. The chain is Methionyl-tRNA formyltransferase from Ralstonia nicotianae (strain ATCC BAA-1114 / GMI1000) (Ralstonia solanacearum).